Consider the following 346-residue polypeptide: Coproporphyrin III ferrochelatase (346 aa).

Fe-coproporphyrin III is bound by residues Ser52 and Tyr121. Fe(2+) contacts are provided by His181 and Glu264.

Belongs to the ferrochelatase family.

The protein resides in the cytoplasm. It catalyses the reaction Fe-coproporphyrin III + 2 H(+) = coproporphyrin III + Fe(2+). The protein operates within porphyrin-containing compound metabolism; protoheme biosynthesis. In terms of biological role, involved in coproporphyrin-dependent heme b biosynthesis. Catalyzes the insertion of ferrous iron into coproporphyrin III to form Fe-coproporphyrin III. In Mycobacterium sp. (strain JLS), this protein is Coproporphyrin III ferrochelatase.